A 255-amino-acid chain; its full sequence is 5'-nucleotidase SurE (255 aa).

A divalent metal cation contacts are provided by aspartate 13, aspartate 14, serine 44, and asparagine 100.

It belongs to the SurE nucleotidase family. A divalent metal cation is required as a cofactor.

It is found in the cytoplasm. The catalysed reaction is a ribonucleoside 5'-phosphate + H2O = a ribonucleoside + phosphate. In terms of biological role, nucleotidase that shows phosphatase activity on nucleoside 5'-monophosphates. The sequence is that of 5'-nucleotidase SurE from Bacteroides fragilis (strain ATCC 25285 / DSM 2151 / CCUG 4856 / JCM 11019 / LMG 10263 / NCTC 9343 / Onslow / VPI 2553 / EN-2).